Consider the following 361-residue polypeptide: D-alanine--D-alanine ligase (361 aa).

The ATP-grasp domain maps to 134–344 (KLLLKSFDIP…FKDLVDNLID (211 aa)). 167–222 (KEVLGYPVIVKPAVLGSSIGINVAYSENQIESFIKEALKYDLTIVIEKFIEAREIE) serves as a coordination point for ATP. Asp-297, Glu-311, and Asn-313 together coordinate Mg(2+).

This sequence belongs to the D-alanine--D-alanine ligase family. The cofactor is Mg(2+). Requires Mn(2+) as cofactor.

The protein resides in the cytoplasm. The enzyme catalyses 2 D-alanine + ATP = D-alanyl-D-alanine + ADP + phosphate + H(+). Its pathway is cell wall biogenesis; peptidoglycan biosynthesis. Cell wall formation. This is D-alanine--D-alanine ligase from Borreliella burgdorferi (strain ATCC 35210 / DSM 4680 / CIP 102532 / B31) (Borrelia burgdorferi).